Consider the following 257-residue polypeptide: Ciliary microtubule associated protein 1B (257 aa).

STPGR repeat units follow at residues P103–R129, P182–R207, and P218–R243.

It belongs to the CIMAP family.

It localises to the cell projection. The protein resides in the cilium. It is found in the flagellum. The chain is Ciliary microtubule associated protein 1B (cimap1b) from Danio rerio (Zebrafish).